We begin with the raw amino-acid sequence, 699 residues long: MATAREIPLDRTRNIGIMAHIDAGKTTTTERVLYYTGVSHKMGEVHEGSAVMDWMEQEQERGITITSAATTCYWLGMDQQYPKHRINIIDTPGHVDFTIEVERSLRVLDGAVAVFCSVGGVEPQSETVWRQANRYHVPRLGFVNKMDRAGANFLRVVNQVKDRLNANPIPIQLPIGAEEDFKGVIDLIREKAIYWNEADRGRTYELADIPEDMKVEVQKWREKMIEAAAESSEELMDKYLEAGDLSPEQIRQGLRQRTLANEIVPILCGSAFKNKGVQALLDAVIDYLPSPTDVPAIRGEEDDGSEGSRSASDDEPFAALAFKIASDPFVGTLTFFRVYSGILKSGDSVYNPIKGKKERIGRLLQMHSNSREEIKEVRAGDIAAAVGLKTVTTGDTICNQQNIITLEKMDFPEPVISVAIEPKTKADQEKMGVALGKLAQEDPSFRVHTDEESAQTIIEGMGELHLEIIVDRMRREFNVEANVGKPRVAYRETIRRSVEQQGKYIRQTGGRGQYGDVWLRIEPREPGAGFEFENAIVGGVVPREYIPAVEKGVREQMENGIRAGYPVVDVKVTIFEGSYHDVDSSEMAFKIAGSMAFKEGASKADPVLLEPIMKVEVVTPEEYMGDVVGDLNRRRGMIQGMDESPAGKIVDVEVPLAEMFGYATDLRSLSQGRATYTMEFLKYAEAPSNIAEAIIKQQS.

The tr-type G domain maps to 10–292 (DRTRNIGIMA…AVIDYLPSPT (283 aa)). Residues 19 to 26 (AHIDAGKT), 90 to 94 (DTPGH), and 144 to 147 (NKMD) contribute to the GTP site.

The protein belongs to the TRAFAC class translation factor GTPase superfamily. Classic translation factor GTPase family. EF-G/EF-2 subfamily.

The protein resides in the cytoplasm. Functionally, catalyzes the GTP-dependent ribosomal translocation step during translation elongation. During this step, the ribosome changes from the pre-translocational (PRE) to the post-translocational (POST) state as the newly formed A-site-bound peptidyl-tRNA and P-site-bound deacylated tRNA move to the P and E sites, respectively. Catalyzes the coordinated movement of the two tRNA molecules, the mRNA and conformational changes in the ribosome. The sequence is that of Elongation factor G from Coxiella burnetii (strain Dugway 5J108-111).